We begin with the raw amino-acid sequence, 607 residues long: V-type proton ATPase catalytic subunit A (607 aa).

ATP is bound at residue 246–253 (GAFGCGKT).

Belongs to the ATPase alpha/beta chains family. As to quaternary structure, V-ATPase is a heteromultimeric enzyme composed of a peripheral catalytic V1 complex (components A to H) attached to an integral membrane V0 proton pore complex (components: a, c, c', c'', d, e, f and VOA1).

It localises to the vacuole membrane. It carries out the reaction ATP + H2O + 4 H(+)(in) = ADP + phosphate + 5 H(+)(out). Its function is as follows. Catalytic subunit of the V1 complex of vacuolar(H+)-ATPase (V-ATPase), a multisubunit enzyme composed of a peripheral complex (V1) that hydrolyzes ATP and a membrane integral complex (V0) that translocates protons. V-ATPase is responsible for acidifying and maintaining the pH of intracellular compartments. The polypeptide is V-type proton ATPase catalytic subunit A (vma-1) (Neurospora crassa (strain ATCC 24698 / 74-OR23-1A / CBS 708.71 / DSM 1257 / FGSC 987)).